We begin with the raw amino-acid sequence, 945 residues long: Oxysterol-binding protein homolog C23H4.01c (945 aa).

The GOLD domain occupies 1-131 (METVEIRSKS…PKTVTFLLTA (131 aa)). In terms of domain architecture, PH spans 149 to 243 (KQIISGTLLK…WCNALEKAKN (95 aa)). Phosphoserine is present on residues Ser288, Ser419, and Ser421. 2 disordered regions span residues 396–555 (ESGA…LPHS) and 846–894 (LEKD…MEEK). Positions 443-454 (TSSISDTSSNSS) are enriched in low complexity. A compositionally biased stretch (polar residues) spans 460–470 (LNATSLASTVD). The segment covering 482–499 (ESNKENDIKRKQPFHDLM) has biased composition (basic and acidic residues). Ser503 carries the post-translational modification Phosphoserine.

This sequence belongs to the OSBP family.

Its subcellular location is the cytoplasm. The protein is Oxysterol-binding protein homolog C23H4.01c of Schizosaccharomyces pombe (strain 972 / ATCC 24843) (Fission yeast).